The primary structure comprises 214 residues: Uracil phosphoribosyltransferase (214 aa).

5-phospho-alpha-D-ribose 1-diphosphate contacts are provided by residues Arg81, Arg106, and 133-141 (DPMLATGNS). Residues Ile196 and 201 to 203 (GDA) each bind uracil. Asp202 is a 5-phospho-alpha-D-ribose 1-diphosphate binding site.

Belongs to the UPRTase family. Mg(2+) serves as cofactor.

It catalyses the reaction UMP + diphosphate = 5-phospho-alpha-D-ribose 1-diphosphate + uracil. The protein operates within pyrimidine metabolism; UMP biosynthesis via salvage pathway; UMP from uracil: step 1/1. Its activity is regulated as follows. Allosterically activated by GTP. Functionally, catalyzes the conversion of uracil and 5-phospho-alpha-D-ribose 1-diphosphate (PRPP) to UMP and diphosphate. This Legionella pneumophila (strain Paris) protein is Uracil phosphoribosyltransferase.